The chain runs to 381 residues: Malonyl-CoA-acyl carrier protein transacylase, mitochondrial (381 aa).

Active-site residues include Ser-151 and His-268. At Lys-312 the chain carries N6-succinyllysine.

This sequence belongs to the type II malonyltransferase family. In terms of tissue distribution, expressed in retinal ganglion cells.

The protein localises to the mitochondrion. The catalysed reaction is holo-[ACP] + malonyl-CoA = malonyl-[ACP] + CoA. Its pathway is lipid metabolism; fatty acid biosynthesis. Functionally, catalyzes the transfer of a malonyl moiety from malonyl-CoA to the free thiol group of the phosphopantetheine arm of the mitochondrial ACP protein (NDUFAB1). This suggests the existence of the biosynthesis of fatty acids in mitochondria. This chain is Malonyl-CoA-acyl carrier protein transacylase, mitochondrial, found in Mus musculus (Mouse).